The sequence spans 498 residues: Diacylglycerol O-acyltransferase 1 (498 aa).

Positions 1–66 (MGDRGGAGSS…AHTRDKDGRT (66 aa)) are disordered. The Cytoplasmic segment spans residues 1–92 (MGDRGGAGSS…SLFSSDSGFS (92 aa)). Positions 1–100 (MGDRGGAGSS…FSNYRGILNW (100 aa)) are involved in homomerization. S20 bears the Phosphoserine mark. The chain crosses the membrane as a helical span at residues 93 to 127 (NYRGILNWCVVMLILSNARLFLENLIKYGILVDPI). The Lumenal segment spans residues 128 to 139 (QVVSLFLKDPYS). The extracellular loop 1 (EL1) stretch occupies residues 128–139 (QVVSLFLKDPYS). A helical membrane pass occupies residues 140-165 (WPAPCVIIASNIFVVAAFQIEKRLAV). An MBOAT fold region spans residues 140 to 498 (WPAPCVIIAS…VLNYDAPVGV (359 aa)). Topologically, residues 166-170 (GALTE) are cytoplasmic. Residues 171–193 (QMGLLLHVVNLATIICFPAAVAL) form a helical membrane-spanning segment. Residues 194 to 200 (LVESITP) are Lumenal-facing. A helical transmembrane segment spans residues 201–232 (VGSVFALASYSIMFLKLYSYRDVNLWCRQRRV). The Cytoplasmic segment spans residues 233 to 284 (KAKAVSTGKKVSGAAAQQAVSYPDNLTYRDLYYFIFAPTLCYELNFPRSPRI). Residues 235 to 287 (KAVSTGKKVSGAAAQQAVSYPDNLTYRDLYYFIFAPTLCYELNFPRSPRIRKR) are intracellular loop 1 (IL1). The helical transmembrane segment at 285-319 (RKRFLLRRVLEMLFFTQLQVGLIQQWMVPTIQNSM) threads the bilayer. Residues 320–326 (KPFKDMD) lie on the Lumenal side of the membrane. A helical transmembrane segment spans residues 327–364 (YSRIIERLLKLAVPNHLIWLIFFYWFFHSCLNAVAELL). Residues 365 to 410 (QFGDREFYRDWWNAESVTYFWQNWNIPVHKWCIRHFYKPMLRHGSS) lie on the Cytoplasmic side of the membrane. Residues 365–410 (QFGDREFYRDWWNAESVTYFWQNWNIPVHKWCIRHFYKPMLRHGSS) form an intracellular loop 2 (IL2) region. The FYXDWWN motif motif lies at 371 to 377 (FYRDWWN). An acyl-CoA is bound by residues 385-393 (WQNWNIPVH), Y401, and R415. The interval 391–405 (PVHKWCIRHFYKPML) is amphipathic helix (AH). A helical membrane pass occupies residues 411–431 (KWVARTGVFLTSAFFHEYLVS). H426 is an active-site residue. The Lumenal segment spans residues 432–439 (VPLRMFRL). Residues 440–458 (WAFTAMMAQVPLAWIVGRF) traverse the membrane as a helical segment. Over 459 to 460 (FQ) the chain is Cytoplasmic. Residues 461–492 (GNYGNAAVWVTLIIGQPVAVLMYVHDYYVLNY) traverse the membrane as a helical segment. Residue Y488 participates in an acyl-CoA binding. Residues 493 to 498 (DAPVGV) lie on the Lumenal side of the membrane.

This sequence belongs to the membrane-bound acyltransferase family. Sterol o-acyltransferase subfamily. In terms of assembly, homodimer or homotetramer; both forms have similar enzymatic activities.

It is found in the endoplasmic reticulum membrane. It carries out the reaction an acyl-CoA + a 1,2-diacyl-sn-glycerol = a triacyl-sn-glycerol + CoA. The catalysed reaction is all-trans-retinol + an acyl-CoA = an all-trans-retinyl ester + CoA. The enzyme catalyses 1-octadecanoyl-2-(5Z,8Z,11Z,14Z-eicosatetraenoyl)-sn-glycerol + (9Z)-octadecenoyl-CoA = 1-octadecanoyl-2-(5Z,8Z,11Z,14Z)-eicosatetraenoyl-3-(9Z)-octadecenoyl-sn-glycerol + CoA. It catalyses the reaction hexadecane-1,2-diol + 2 hexadecanoyl-CoA = 1,2-O,O-dihexadecanoyl-1,2-hexadecanediol + 2 CoA. It carries out the reaction hexadecane-1,2-diol + hexadecanoyl-CoA = 2-hydroxyhexadecyl hexadecanoate + CoA. The catalysed reaction is 2-(9Z-octadecenoyl)-glycerol + hexadecanoyl-CoA = 1-hexadecanoyl-2-(9Z-octadecenoyl)-sn-glycerol + CoA. The enzyme catalyses 1,2-di-(9Z-octadecenoyl)-sn-glycerol + hexadecanoyl-CoA = 1,2-di-(9Z)-octadecenoyl-3-hexadecanoyl-sn-glycerol + CoA. It catalyses the reaction hexadecan-1-ol + hexadecanoyl-CoA = hexadecanyl hexadecanoate + CoA. It carries out the reaction all-trans-retinol + hexadecanoyl-CoA = all-trans-retinyl hexadecanoate + CoA. The catalysed reaction is 13-cis-retinol + hexadecanoyl-CoA = 13-cis-retinyl hexadecanoate + CoA. The enzyme catalyses 1,2-di-(9Z-octadecenoyl)-sn-glycerol + (9Z)-octadecenoyl-CoA = 1,2,3-tri-(9Z-octadecenoyl)-glycerol + CoA. It catalyses the reaction 1,3-di-(9Z-octadecenoyl)-glycerol + (9Z)-octadecenoyl-CoA = 1,2,3-tri-(9Z-octadecenoyl)-glycerol + CoA. It carries out the reaction 2,3-di-(9Z)-octadecenoyl-sn-glycerol + (9Z)-octadecenoyl-CoA = 1,2,3-tri-(9Z-octadecenoyl)-glycerol + CoA. The catalysed reaction is 1-O-(9Z-octadecenyl)-glycerol + (9Z)-octadecenoyl-CoA = 1-O-(9Z-octadecyl)-3-(9Z-octadecenoyl)-glycerol + CoA. The enzyme catalyses 1-(9Z-octadecenoyl)-glycerol + (9Z)-octadecenoyl-CoA = 1,2-di-(9Z-octadecenoyl)-glycerol + CoA. It catalyses the reaction 2-(9Z-octadecenoyl)-glycerol + (9Z)-octadecenoyl-CoA = 1,2-di-(9Z-octadecenoyl)-sn-glycerol + CoA. It carries out the reaction 1-O-(9Z-octadecyl)-3-(9Z-octadecenoyl)-glycerol + (9Z)-octadecenoyl-CoA = 1-O-(9Z-octadecenyl)-2,3-di-(9Z-octadecenoyl)glycerol + CoA. The catalysed reaction is 1,2-di-(9Z-octadecenoyl)-glycerol + (9Z)-octadecenoate + H(+) = 1,2,3-tri-(9Z-octadecenoyl)-glycerol + H2O. It functions in the pathway lipid metabolism; glycerolipid metabolism. In terms of biological role, catalyzes the terminal and only committed step in triacylglycerol synthesis by using diacylglycerol and fatty acyl CoA as substrates. Highly expressed in epithelial cells of the small intestine and its activity is essential for the absorption of dietary fats. In liver, plays a role in esterifying exogenous fatty acids to glycerol, and is required to synthesize fat for storage. Also present in female mammary glands, where it produces fat in the milk. May be involved in VLDL (very low density lipoprotein) assembly. In contrast to DGAT2 it is not essential for survival. Functions as the major acyl-CoA retinol acyltransferase (ARAT) in the skin, where it acts to maintain retinoid homeostasis and prevent retinoid toxicity leading to skin and hair disorders. Exhibits additional acyltransferase activities, includin acyl CoA:monoacylglycerol acyltransferase (MGAT), wax monoester and wax diester synthases. Also able to use 1-monoalkylglycerol (1-MAkG) as an acyl acceptor for the synthesis of monoalkyl-monoacylglycerol (MAMAG). This is Diacylglycerol O-acyltransferase 1 from Mus musculus (Mouse).